The primary structure comprises 151 residues: 4-hydroxybenzoyl-CoA thioesterase (151 aa).

Residue glutamate 73 is part of the active site. Residue 100–102 coordinates substrate; that stretch reads FFR.

This sequence belongs to the thioesterase PaaI family. In terms of assembly, homotetramer.

The catalysed reaction is 4-hydroxybenzoyl-CoA + H2O = 4-hydroxybenzoate + CoA + H(+). The protein operates within xenobiotic degradation; 4-chlorobenzoate degradation; 4-hydroxybenzoate from 4-chlorobenzoate: step 3/3. In Arthrobacter globiformis, this protein is 4-hydroxybenzoyl-CoA thioesterase.